The chain runs to 92 residues: Signal recognition particle 19 kDa protein (92 aa).

This sequence belongs to the SRP19 family. Part of the signal recognition particle protein translocation system, which is composed of SRP and FtsY. Archaeal SRP consists of a 7S RNA molecule of 300 nucleotides and two protein subunits: SRP54 and SRP19.

The protein resides in the cytoplasm. Functionally, involved in targeting and insertion of nascent membrane proteins into the cytoplasmic membrane. Binds directly to 7S RNA and mediates binding of the 54 kDa subunit of the SRP. The sequence is that of Signal recognition particle 19 kDa protein from Halobacterium salinarum (strain ATCC 29341 / DSM 671 / R1).